A 151-amino-acid polypeptide reads, in one-letter code: MSTEQTFIAVKPDAVQRGLIGYIISKFELKGYKLRALKFLVPSRDLVEEHYAEHKGKPFYEKLVGFMASGPVCAMIWEGKQAVKTGRLMLGASNPLDSAPGTIRGDYGIDLGRNVCHGSDSIESANREIKLWFQPSEIQVYDRTIEPWIYE.

The ATP site is built by Lys-11, Phe-59, Arg-87, Arg-104, and Asn-114. The Pros-phosphohistidine intermediate role is filled by His-117.

The protein belongs to the NDK family. Homotrimer. It depends on Mg(2+) as a cofactor.

The catalysed reaction is a 2'-deoxyribonucleoside 5'-diphosphate + ATP = a 2'-deoxyribonucleoside 5'-triphosphate + ADP. The enzyme catalyses a ribonucleoside 5'-diphosphate + ATP = a ribonucleoside 5'-triphosphate + ADP. Functionally, major role in the synthesis of nucleoside triphosphates other than ATP. The ATP gamma phosphate is transferred to the NDP beta phosphate via a ping-pong mechanism, using a phosphorylated active-site intermediate. The sequence is that of Nucleoside diphosphate kinase (ndk1) from Schizosaccharomyces pombe (strain 972 / ATCC 24843) (Fission yeast).